A 423-amino-acid polypeptide reads, in one-letter code: Cyclin-B2-1 (423 aa).

A disordered region spans residues 1-61 (MDRASENRRL…EKSGKEEQKP (61 aa)). Over residues 49–60 (PMLEKSGKEEQK) the composition is skewed to basic and acidic residues.

This sequence belongs to the cyclin family. Cyclin AB subfamily. Interacts with CDKB2-1. Expressed in the intercalary meristem and the elongation zone of internodes. Expressed in adventitious roots at all nodes under submergence conditions.

Involved in the control of the cell cycle at the G2/M (mitosis) transition. May activate CDKB2-1 kinase. This chain is Cyclin-B2-1 (CYCB2-1), found in Oryza sativa subsp. indica (Rice).